The following is a 1496-amino-acid chain: MTDTNELFEDQTTALQNSAPIAPLANPQHTVSRGKFRSLTLINWNGFFARTFDLDELVTTLSGGNGAGKSTTMAGFVTALIPDLTLLNFRNTTEAGSTSSSRDKGLYGKLKAGVCYAVLESLNSRGQRVITGVRLQQVAGRDKKVDIRSFSLQNVPMSDSIISILTEQVGEKARVLPLADLKDKFDGSEVLFKQYHSITDYHSFMFDLGVIPKRLRSSADRSKFYKLIEASLYGGISSVITKSLRDYLLPENTGVRQAFQDMESALRENRMTLEAIKVTQSDRDMFKHLITESTNYVSADYMRNANERRGNVQIALEQRRAWYESKSKLELEQQRLIEFSREVADISENESGLEAEYNSANDHLNLVMNALRHQEKIERYQDEVAELNEKLEEQQIALEEVSEQVETAQARADDADDQVEELRSQMADYQQALDAQQTRALQYQQAIAALEKAKQLCGLPHLDLHNVEDYHAEFAAQADDLTDQVFELEQRLSVSDMAKTQFEKAYELVCKISGEIDRSGAWNEARSLLTAFTDQKMQATQAVALRQKLADLEQRLHQQQNAERLLAEFNQKAQTQFETAEELEGYFEQQQARLEDVEAELAEFVEVRSTQRQQREQLNQQYNQLAKTAPAWHTAQSALARLEEQCGEKFEASQSVMQFMQNMLIKEREATLARDELARREAALDAQITRLSQPDGSDDVRLNQLAERFGGVLLSELYDDVSIDDAPYFSALYGEARHAIVVRDLESVKSQLEKLDDCPTDLYLIEGDPSAFDDAVFTAEELAEGVVVKVSDRQWRYSKFPEVPLFGRAAREKHLETLKAERDEVSEQHAERAFDVQKCQRLHQHLSQFVGTHLSLAFQPNPEEQMQEIAAERTEIERELNQAAGNEQQLRTQLDSAKAKLQMLNKILPLVSLLEDETLADRAEECRAQLDEAEEDEQFVRQFGNYLTQLEPIAASLKSDPAKFEQLEQDYQQAKAEQKQVQQKVFALSDVIQRRVHFSYEEAIGSEGSALTEQLRARLESAQREREQARDQLRQAQAQFTQYNQVLTGLRSSCDAKTQMLQELIREIDDLGVRGDIGAEERARSRRDELQQRLSQQRSRKGYLDKQLGTIEAEIDNLTRTLRKAERDYHTQRELVVQAKVSWCLVLKLSRNSDVEKRLNRRELAYQSAEELRSISDKALGALRTAVADNEYLRDSLRASEDSRKPENKVAFFIAVYQHLRERIRQDIIKTDDPIDAIEQMEIELSRLTNELTSREKKLAISAESVANILRKTIQREQNRILQLNQGLQNIAFGQVKGVRLVVNIRDTHAILLNALSNGREEHKDLFDSQKLSFSEALAMLYKRVNPHIEMGQRTPQTIGEELLDYRNYLDLEVETFRGADGWMRAESSALSTGEAIGTGMSILLMVVQSWEEESRRMRAKDILPSRLLFLDEAARLDATSINTLFELCERLDMQLLIAAPENISPERGTTYKLVRKITNNQEYVHVVGLKGFGQQ.

Position 63–70 (63–70) interacts with ATP; it reads GGNGAGKS. 2 coiled-coil regions span residues 328-493 and 536-632; these read KLEL…QRLS and KMQA…APAW. The flexible hinge stretch occupies residues 694 to 811; it reads PDGSDDVRLN…EVPLFGRAAR (118 aa). Coiled-coil stretches lie at residues 861–1171 and 1235–1291; these read NPEE…SAEE and IDAI…LQNI. Over residues 1082–1091 the composition is skewed to basic and acidic residues; it reads RARSRRDELQ. The disordered stretch occupies residues 1082-1101; the sequence is RARSRRDELQQRLSQQRSRK.

The protein belongs to the SMC family. MukB subfamily. Homodimerization via its hinge domain. Binds to DNA via its C-terminal region. Interacts, and probably forms a ternary complex, with MukE and MukF via its C-terminal region. The complex formation is stimulated by calcium or magnesium. Interacts with tubulin-related protein FtsZ.

The protein localises to the cytoplasm. Its subcellular location is the nucleoid. Its function is as follows. Plays a central role in chromosome condensation, segregation and cell cycle progression. Functions as a homodimer, which is essential for chromosome partition. Involved in negative DNA supercoiling in vivo, and by this means organize and compact chromosomes. May achieve or facilitate chromosome segregation by condensation DNA from both sides of a centrally located replisome during cell division. The sequence is that of Chromosome partition protein MukB from Actinobacillus pleuropneumoniae serotype 7 (strain AP76).